The sequence spans 123 residues: Large ribosomal subunit protein uL14 (123 aa).

It belongs to the universal ribosomal protein uL14 family. Part of the 50S ribosomal subunit. Forms a cluster with proteins L3 and L19. In the 70S ribosome, L14 and L19 interact and together make contacts with the 16S rRNA in bridges B5 and B8.

Its function is as follows. Binds to 23S rRNA. Forms part of two intersubunit bridges in the 70S ribosome. This chain is Large ribosomal subunit protein uL14, found in Hamiltonella defensa subsp. Acyrthosiphon pisum (strain 5AT).